Reading from the N-terminus, the 184-residue chain is dITP/XTP pyrophosphatase (184 aa).

Residue Thr-7–Lys-12 coordinates substrate. Mg(2+) contacts are provided by Glu-36 and Asp-65. The active-site Proton acceptor is Asp-65. Substrate is bound by residues Ser-66, Phe-139–Asp-142, Lys-162, and His-167–Arg-168.

Belongs to the HAM1 NTPase family. In terms of assembly, homodimer. Requires Mg(2+) as cofactor.

It catalyses the reaction XTP + H2O = XMP + diphosphate + H(+). The enzyme catalyses dITP + H2O = dIMP + diphosphate + H(+). The catalysed reaction is ITP + H2O = IMP + diphosphate + H(+). In terms of biological role, pyrophosphatase that catalyzes the hydrolysis of nucleoside triphosphates to their monophosphate derivatives, with a high preference for the non-canonical purine nucleotides XTP (xanthosine triphosphate), dITP (deoxyinosine triphosphate) and ITP. Seems to function as a house-cleaning enzyme that removes non-canonical purine nucleotides from the nucleotide pool, thus preventing their incorporation into DNA/RNA and avoiding chromosomal lesions. This Thermococcus kodakarensis (strain ATCC BAA-918 / JCM 12380 / KOD1) (Pyrococcus kodakaraensis (strain KOD1)) protein is dITP/XTP pyrophosphatase.